A 520-amino-acid polypeptide reads, in one-letter code: NAD(P)H-quinone oxidoreductase subunit 2 (520 aa).

A run of 14 helical transmembrane segments spans residues 26–46, 54–74, 91–111, 120–140, 144–164, 179–199, 220–240, 252–272, 288–308, 314–334, 342–362, 386–406, 421–441, and 474–494; these read AVLPEAAVLMAMLGTLLVDLA, WSPPICYAGLGSALILLAMQW, LAIAFRGVIVLSTLISLLISW, PIGEFAAILLAATLGAMLLCG, LVSVFVSLETLSVASYLLSGY, LLVGSAAAAVFLYGASLLYGI, SALALVFVLSTVAFKIAAVPF, PTPVVAFLSVGSKAAGFALAI, LLFTVLAVLSMSLGNVVALAQ, MLAYSSIGQAGFVMIGLVCGT, VLYMAAYLFMNLGAFACIILF, LGLSLCLLSLGGIPPMLGFFG, LLVTVGLVTSVISIYYYISVI, and VALIFCVLVTAIGGIISNPLF.

The protein belongs to the complex I subunit 2 family. As to quaternary structure, NDH-1 can be composed of about 15 different subunits; different subcomplexes with different compositions have been identified which probably have different functions.

It is found in the cellular thylakoid membrane. It catalyses the reaction a plastoquinone + NADH + (n+1) H(+)(in) = a plastoquinol + NAD(+) + n H(+)(out). It carries out the reaction a plastoquinone + NADPH + (n+1) H(+)(in) = a plastoquinol + NADP(+) + n H(+)(out). Its function is as follows. NDH-1 shuttles electrons from an unknown electron donor, via FMN and iron-sulfur (Fe-S) centers, to quinones in the respiratory and/or the photosynthetic chain. The immediate electron acceptor for the enzyme in this species is believed to be plastoquinone. Couples the redox reaction to proton translocation, and thus conserves the redox energy in a proton gradient. Cyanobacterial NDH-1 also plays a role in inorganic carbon-concentration. This chain is NAD(P)H-quinone oxidoreductase subunit 2, found in Prochlorococcus marinus (strain NATL2A).